Reading from the N-terminus, the 367-residue chain is CCN family member 4 (367 aa).

An N-terminal signal peptide occupies residues 1-22; it reads MRWLLPWTLAAVAVLMVGNILA. The 74-residue stretch at 45–118 folds into the IGFBP N-terminal domain; sequence RPEFCKWPCE…RYAIGVCAQV (74 aa). 4 cysteine pairs are disulfide-bonded: C49-C73, C53-C75, C55-C76, and C62-C79. N86 is a glycosylation site (N-linked (GlcNAc...) asparagine). Disulfide bonds link C87-C101 and C93-C115. Residues 121 to 186 form the VWFC domain; that stretch reads VGCVLDGVRY…GQCCEQWVCD (66 aa). N143 carries N-linked (GlcNAc...) asparagine glycosylation. Residues 215–260 enclose the TSP type-1 domain; sequence NCIAYTSPWSPCSTTCGLGISTRISNVNARCWPEQESRLCNLRPCD. 5 cysteine pairs are disulfide-bonded: C273–C310, C290–C324, C301–C340, C304–C342, and C309–C346. One can recognise a CTCK domain in the interval 273–347; the sequence is CLAVYQPEEA…NACFCNLSCR (75 aa). N284 carries an N-linked (GlcNAc...) asparagine glycan. An N-linked (GlcNAc...) asparagine glycan is attached at N343.

It belongs to the CCN family.

The protein localises to the secreted. Downstream regulator in the Wnt/Frizzled-signaling pathway. Associated with cell survival. Adheres to skin and melanoma fibroblasts. In vitro binding to skin fibroblasts occurs through the proteoglycans, decorin and biglycan. This is CCN family member 4 (Ccn4) from Rattus norvegicus (Rat).